Consider the following 176-residue polypeptide: Centromere protein R (176 aa).

K8 participates in a covalent cross-link: Glycyl lysine isopeptide (Lys-Gly) (interchain with G-Cter in SUMO2). A Phosphoserine modification is found at S17. The interval 20–50 is DD1; it reads PSKIVRKKSITAYSPTTGTYQLSPFSSPATP. K22 participates in a covalent cross-link: Glycyl lysine isopeptide (Lys-Gly) (interchain with G-Cter in SUMO2). S28 is subject to Phosphoserine. Residues 34–48 are compositionally biased toward polar residues; the sequence is PTTGTYQLSPFSSPA. The interval 34–78 is disordered; sequence PTTGTYQLSPFSSPATPKEQEHRNGPSNETRKRSNLSSPVRQEST. The span at 51–65 shows a compositional bias: basic and acidic residues; sequence KEQEHRNGPSNETRK. The short motif at 63–66 is the Nuclear localization signal element; the sequence is TRKR. S71 carries the post-translational modification Phosphoserine. Positions 82-112 form a coiled coil; that stretch reads RDGFMVLLSKIEISSEKTMEIMKNLSSIQAL. The short motif at 171–175 is the LXXIL motif element; the sequence is LKAIL.

In terms of assembly, homodimer; mediated by the coiled coil domain. Interacts with CCNA2 and MTA1. Interacts with NFKB1 NF-kappa-B subunit. Component of the CENPA-CAD complex, composed of CENPI, CENPK, CENPL, CENPO, CENPP, CENPQ, CENPR and CENPS. The CENPA-CAD complex interacts with the CENPA-NAC complex, at least composed of CENPA, CENPC, CENPH, CENPM, CENPN, CENPT and CENPU. Interacts with TASOR. In terms of tissue distribution, expressed in the spermatogonia and spermatocytes.

The protein resides in the nucleus. It is found in the chromosome. Its subcellular location is the centromere. It localises to the kinetochore. Its function is as follows. Transcription coregulator that can have both coactivator and corepressor functions. Involved in the coactivation of nuclear receptors for retinoid X (RXRs) and thyroid hormone (TRs) in a ligand-dependent fashion. In contrast, it does not coactivate nuclear receptors for retinoic acid, vitamin D, progesterone receptor, nor glucocorticoid. Acts as a coactivator for estrogen receptor alpha. Acts as a transcriptional corepressor via its interaction with the NFKB1 NF-kappa-B subunit, possibly by interfering with the transactivation domain of NFKB1. Induces apoptosis in breast cancer cells, but not in other cancer cells, via a caspase-2 mediated pathway that involves mitochondrial membrane permeabilization but does not require other caspases. May also act as an inhibitor of cyclin A-associated kinase. Also acts a component of the CENPA-CAD (nucleosome distal) complex, a complex recruited to centromeres which is involved in assembly of kinetochore proteins, mitotic progression and chromosome segregation. May be involved in incorporation of newly synthesized CENPA into centromeres via its interaction with the CENPA-NAC complex. The chain is Centromere protein R (Itgb3bp) from Mus musculus (Mouse).